The primary structure comprises 117 residues: DNA-directed RNA polymerase subunit omega (117 aa).

Belongs to the RNA polymerase subunit omega family. In terms of assembly, the RNAP catalytic core consists of 2 alpha, 1 beta, 1 beta' and 1 omega subunit. When a sigma factor is associated with the core the holoenzyme is formed, which can initiate transcription.

The enzyme catalyses RNA(n) + a ribonucleoside 5'-triphosphate = RNA(n+1) + diphosphate. Functionally, promotes RNA polymerase assembly. Latches the N- and C-terminal regions of the beta' subunit thereby facilitating its interaction with the beta and alpha subunits. This chain is DNA-directed RNA polymerase subunit omega, found in Jannaschia sp. (strain CCS1).